The sequence spans 360 residues: Histidinol-phosphate aminotransferase (360 aa).

At K221 the chain carries N6-(pyridoxal phosphate)lysine.

This sequence belongs to the class-II pyridoxal-phosphate-dependent aminotransferase family. Histidinol-phosphate aminotransferase subfamily. In terms of assembly, homodimer. It depends on pyridoxal 5'-phosphate as a cofactor.

The catalysed reaction is L-histidinol phosphate + 2-oxoglutarate = 3-(imidazol-4-yl)-2-oxopropyl phosphate + L-glutamate. Its pathway is amino-acid biosynthesis; L-histidine biosynthesis; L-histidine from 5-phospho-alpha-D-ribose 1-diphosphate: step 7/9. This Desulfitobacterium hafniense (strain DSM 10664 / DCB-2) protein is Histidinol-phosphate aminotransferase.